The primary structure comprises 61 residues: Phospholipase A2 (61 aa).

3 residues coordinate Ca(2+): Tyr-27, Gly-29, and Gly-31. Cysteines 28 and 35 form a disulfide. His-38 is a catalytic residue. Residue Asp-39 participates in Ca(2+) binding. Cys-41 and Cys-59 are joined by a disulfide. Asp-60 is a catalytic residue.

Belongs to the phospholipase A2 family. Group II subfamily. D49 sub-subfamily. Homodimer. Requires Ca(2+) as cofactor. As to expression, expressed by the venom gland.

It is found in the secreted. It carries out the reaction a 1,2-diacyl-sn-glycero-3-phosphocholine + H2O = a 1-acyl-sn-glycero-3-phosphocholine + a fatty acid + H(+). In terms of biological role, snake venom phospholipase A2 (PLA2) that displays edema-inducing activities. PLA2 catalyzes the calcium-dependent hydrolysis of the 2-acyl groups in 3-sn-phosphoglycerides. The polypeptide is Phospholipase A2 (Crotalus atrox (Western diamondback rattlesnake)).